The following is a 786-amino-acid chain: Endonuclease MutS2 (786 aa).

Position 332-339 (332-339 (GPNTGGKT)) interacts with ATP. The Smr domain occupies 711-786 (IDLRGMDSEE…GTGVTVVILK (76 aa)).

Belongs to the DNA mismatch repair MutS family. MutS2 subfamily. Homodimer. Binds to stalled ribosomes, contacting rRNA.

In terms of biological role, endonuclease that is involved in the suppression of homologous recombination and thus may have a key role in the control of bacterial genetic diversity. Its function is as follows. Acts as a ribosome collision sensor, splitting the ribosome into its 2 subunits. Detects stalled/collided 70S ribosomes which it binds and splits by an ATP-hydrolysis driven conformational change. Acts upstream of the ribosome quality control system (RQC), a ribosome-associated complex that mediates the extraction of incompletely synthesized nascent chains from stalled ribosomes and their subsequent degradation. Probably generates substrates for RQC. In Clostridium perfringens (strain 13 / Type A), this protein is Endonuclease MutS2.